The sequence spans 246 residues: Flagellar brake protein YcgR (246 aa).

The PilZ domain occupies 122-234 (QRREFFRIQT…PMETIIQRYV (113 aa)).

The protein belongs to the YcgR family. Monomer. Interacts with the flagellar basal bodies.

The protein localises to the bacterial flagellum basal body. In terms of biological role, acts as a flagellar brake, regulating swimming and swarming in a bis-(3'-5') cyclic diguanylic acid (c-di-GMP)-dependent manner. Binds 1 c-di-GMP dimer per subunit. Increasing levels of c-di-GMP lead to decreased motility. This Chromobacterium violaceum (strain ATCC 12472 / DSM 30191 / JCM 1249 / CCUG 213 / NBRC 12614 / NCIMB 9131 / NCTC 9757 / MK) protein is Flagellar brake protein YcgR.